The chain runs to 1131 residues: DNA polymerase II large subunit (1131 aa).

Belongs to the archaeal DNA polymerase II family. In terms of assembly, heterodimer of a large subunit and a small subunit.

The enzyme catalyses DNA(n) + a 2'-deoxyribonucleoside 5'-triphosphate = DNA(n+1) + diphosphate. It carries out the reaction Exonucleolytic cleavage in the 3'- to 5'-direction to yield nucleoside 5'-phosphates.. Possesses two activities: a DNA synthesis (polymerase) and an exonucleolytic activity that degrades single-stranded DNA in the 3'- to 5'-direction. Has a template-primer preference which is characteristic of a replicative DNA polymerase. The polypeptide is DNA polymerase II large subunit (Methanococcus maripaludis (strain C5 / ATCC BAA-1333)).